Reading from the N-terminus, the 422-residue chain is tRNA(Met) cytidine acetate ligase (422 aa).

Residues 7-20, G102, N172, and R197 contribute to the ATP site; that span reads ITEY…HLYH.

This sequence belongs to the TmcAL family.

The protein resides in the cytoplasm. The catalysed reaction is cytidine(34) in elongator tRNA(Met) + acetate + ATP = N(4)-acetylcytidine(34) in elongator tRNA(Met) + AMP + diphosphate. Catalyzes the formation of N(4)-acetylcytidine (ac(4)C) at the wobble position of elongator tRNA(Met), using acetate and ATP as substrates. First activates an acetate ion to form acetyladenylate (Ac-AMP) and then transfers the acetyl group to tRNA to form ac(4)C34. The protein is tRNA(Met) cytidine acetate ligase of Halothermothrix orenii (strain H 168 / OCM 544 / DSM 9562).